A 1382-amino-acid chain; its full sequence is DNA-directed RNA polymerase subunit beta'' (1382 aa).

Residues cysteine 224, cysteine 294, cysteine 301, and cysteine 304 each coordinate Zn(2+).

The protein belongs to the RNA polymerase beta' chain family. RpoC2 subfamily. As to quaternary structure, in plastids the minimal PEP RNA polymerase catalytic core is composed of four subunits: alpha, beta, beta', and beta''. When a (nuclear-encoded) sigma factor is associated with the core the holoenzyme is formed, which can initiate transcription. The cofactor is Zn(2+).

The protein resides in the plastid. It is found in the chloroplast. It catalyses the reaction RNA(n) + a ribonucleoside 5'-triphosphate = RNA(n+1) + diphosphate. In terms of biological role, DNA-dependent RNA polymerase catalyzes the transcription of DNA into RNA using the four ribonucleoside triphosphates as substrates. The chain is DNA-directed RNA polymerase subunit beta'' from Dioscorea elephantipes (Elephant's foot yam).